Here is a 307-residue protein sequence, read N- to C-terminus: N-acetylglucosaminyl-diphospho-decaprenol L-rhamnosyltransferase (307 aa).

This sequence belongs to the glycosyltransferase 2 family. Mn(2+) is required as a cofactor. The cofactor is Mg(2+).

It catalyses the reaction N-acetyl-alpha-D-glucosaminyl-1-diphospho-trans,octa-cis-decaprenol + dTDP-beta-L-rhamnose = alpha-L-rhamnosyl-(1-&gt;3)-N-acetyl-alpha-D-glucosaminyl-diphospho-trans,octa-cis-decaprenol + dTDP + H(+). Involved in the biosynthesis of the mycolylarabinogalactan-peptidoglycan (mAGP) complex, an essential component of the mycobacterial cell wall. Catalyzes the transfer of the rhamnosyl moiety from dTDP-rhamnosyl (dTDP-Rha) onto the decaprenyl-pyrophosphoryl-GlcNAc (C50-PP-GlcNAc), yielding rhamnosyl-decaprenyl-pyrophosphoryl-GlcNAc (Rha-C50-PP-GlcNAc). The sequence is that of N-acetylglucosaminyl-diphospho-decaprenol L-rhamnosyltransferase (wbbL) from Mycobacterium tuberculosis (strain CDC 1551 / Oshkosh).